A 296-amino-acid chain; its full sequence is MYFSQEEWELLDPTQKALYNDVMQENYETVISLALFVLPKPKVISCLEQGEEPWVQVSPEFKDSAGKSPTGLKLKNDTENHQPVSLSDLEIQASAGVISKKAKVKVPQKTAGKENHFDMHRVGKWHQDFPVKKRKKLSTWKQELLKLMDRHKKDCAREKPFKCQECGKTFRVSSDLIKHQRIHTEEKPYKCQQCDKRFRWSSDLNKHLTTHQGIKPYKCSWCGKSFSQNTNLHTHQRTHTGEKPFTCHECGKKFSQNSHLIKHRRTHTGEQPYTCSICRRNFSRRSSLLRHQKLHL.

The 66-residue stretch at 1–66 (MYFSQEEWEL…VSPEFKDSAG (66 aa)) folds into the KRAB domain. C2H2-type zinc fingers lie at residues 161–183 (FKCQ…QRIH), 189–211 (YKCQ…LTTH), 217–239 (YKCS…QRTH), 245–267 (FTCH…RRTH), and 273–295 (YTCS…QKLH).

This sequence belongs to the krueppel C2H2-type zinc-finger protein family.

The protein localises to the nucleus. Its function is as follows. May be involved in transcriptional regulation. The chain is Zinc finger protein 75A (ZNF75A) from Homo sapiens (Human).